A 396-amino-acid chain; its full sequence is S-adenosylmethionine synthase (396 aa).

His16 serves as a coordination point for ATP. Asp18 provides a ligand contact to Mg(2+). Position 44 (Glu44) interacts with K(+). Glu57 and Gln100 together coordinate L-methionine. The segment at 100-110 (QSVDINQGVDR) is flexible loop. ATP contacts are provided by residues 165–167 (DAK), Asp240, 246–247 (RK), Ala263, and Lys267. Position 240 (Asp240) interacts with L-methionine. Position 271 (Lys271) interacts with L-methionine.

This sequence belongs to the AdoMet synthase family. In terms of assembly, homotetramer; dimer of dimers. Mg(2+) serves as cofactor. Requires K(+) as cofactor.

It localises to the cytoplasm. It carries out the reaction L-methionine + ATP + H2O = S-adenosyl-L-methionine + phosphate + diphosphate. It functions in the pathway amino-acid biosynthesis; S-adenosyl-L-methionine biosynthesis; S-adenosyl-L-methionine from L-methionine: step 1/1. Functionally, catalyzes the formation of S-adenosylmethionine (AdoMet) from methionine and ATP. The overall synthetic reaction is composed of two sequential steps, AdoMet formation and the subsequent tripolyphosphate hydrolysis which occurs prior to release of AdoMet from the enzyme. The chain is S-adenosylmethionine synthase from Pseudomonas aeruginosa (strain UCBPP-PA14).